The following is a 91-amino-acid chain: Protein SPATA45 homolog (91 aa).

Residues 42–91 (RADRKHDPNGFNSSVFKGASNQHQESSLDFATAEPEFHRERRHFPEKSEY) are disordered. Over residues 51–70 (GFNSSVFKGASNQHQESSLD) the composition is skewed to polar residues. Positions 76–91 (PEFHRERRHFPEKSEY) are enriched in basic and acidic residues.

The protein belongs to the SPATA45 family.

The polypeptide is Protein SPATA45 homolog (Nematostella vectensis (Starlet sea anemone)).